The primary structure comprises 246 residues: Virulence plasmid protein pGP6-D (246 aa).

It belongs to the UPF0137 (pGP6-D) family.

This Chlamydia muridarum (strain MoPn / Nigg) protein is Virulence plasmid protein pGP6-D.